Consider the following 325-residue polypeptide: Pyruvate dehydrogenase E1 component subunit beta (325 aa).

Glu-60 lines the thiamine diphosphate pocket.

As to quaternary structure, heterodimer of an alpha and a beta chain. Requires thiamine diphosphate as cofactor.

It carries out the reaction N(6)-[(R)-lipoyl]-L-lysyl-[protein] + pyruvate + H(+) = N(6)-[(R)-S(8)-acetyldihydrolipoyl]-L-lysyl-[protein] + CO2. Its function is as follows. The pyruvate dehydrogenase complex catalyzes the overall conversion of pyruvate to acetyl-CoA and CO(2). It contains multiple copies of three enzymatic components: pyruvate dehydrogenase (E1), dihydrolipoamide acetyltransferase (E2) and lipoamide dehydrogenase (E3). This chain is Pyruvate dehydrogenase E1 component subunit beta (pdhB), found in Staphylococcus aureus (strain Mu50 / ATCC 700699).